The chain runs to 189 residues: Thymidine kinase (189 aa).

Residues 9–16 (GTMNSGKS) and 85–88 (DEAQ) contribute to the ATP site. Glu-86 (proton acceptor) is an active-site residue. The Zn(2+) site is built by Cys-143, Cys-146, Cys-180, and His-183.

It belongs to the thymidine kinase family. Homotetramer.

It localises to the cytoplasm. It catalyses the reaction thymidine + ATP = dTMP + ADP + H(+). The chain is Thymidine kinase from Lactococcus lactis subsp. lactis (strain IL1403) (Streptococcus lactis).